We begin with the raw amino-acid sequence, 210 residues long: Tetraspanin-31 (210 aa).

Over M1 to A12 the chain is Cytoplasmic. Residues L13–W33 traverse the membrane as a helical segment. At A34–H44 the chain is on the extracellular side. The helical transmembrane segment at I45–V65 threads the bilayer. The Cytoplasmic segment spans residues G66–Q72. A helical transmembrane segment spans residues V73–S93. Residues C94–K173 lie on the Extracellular side of the membrane. N-linked (GlcNAc...) asparagine glycans are attached at residues N100, N109, N117, and N134. A helical membrane pass occupies residues I174 to M194. Topologically, residues R195–L210 are cytoplasmic.

It belongs to the tetraspanin (TM4SF) family.

The protein resides in the membrane. This Bos taurus (Bovine) protein is Tetraspanin-31 (TSPAN31).